Consider the following 720-residue polypeptide: MELGWWPQLGLAFLQLLLISSLPREYTVINEACPGAEWNIMCRECCEYDQIKCECPGKKEVVGYTIPCCRNEENECDSCLIHPGCTIFENCKTCRNGSWGGTLDDFYVKGIYCAECRAGWYGGDCMRCGQVLRVPKGQILLESYPLNAHCEWTIHAKPGFIIQLRIVMLSLEFDYMCQYDYVEVRDGDSSDSQIIKRFCGNERPAPIRSTGSSLHILFHSDGSKNFDGFHAIFEEITACSSSPCFHDGTCLLDSTGSYKCACLAGYTGKHCENLLEERNCSDPGGPVNGYKKITGGPGLIHGHYAKIGTVLTFFCNSSYVLSGNEMRTCQQNGEWSGKQPICIKACREPKISDLVRRKVLPMQVQSRETPLHQLYSSAFSKQKLQDAPTKKPVLPFGDLPPGYQHLHTQLQYECISPFYRRLGSSRRTCLRTGKWSGRAPSCIPICGKTENVSAPKTQGTRWPWQAAIYRRAGGVHGGGLHKDAWFLVCSGALVNERTVVVAAHCVTDLGRVTVIKTADLKVVLGKFYRDDDRDEKSIQSLRISAIILHPNYDPILLDMDIAILKLLDKARMSTRVQPICLAAPRDLSTSFQESRITVAGWNVLADSRSPGYKDDMLRSGVVRVADSLLCEEQHEAQGIPVSVTDSMFCAGRDPTAPSDICTAETGGIAAVSFPGRASPEPRWHLVGLVSWSYDKTCSHSLSTAFTKVLPFKDWIERNMK.

The first 21 residues, 1-21 (MELGWWPQLGLAFLQLLLISS), serve as a signal peptide directing secretion. 8 disulfide bridges follow: cysteine 128/cysteine 150, cysteine 177/cysteine 199, cysteine 239/cysteine 250, cysteine 244/cysteine 260, cysteine 262/cysteine 271, cysteine 280/cysteine 329, cysteine 315/cysteine 342, and cysteine 414/cysteine 442. A CUB domain is found at 128–236 (CGQVLRVPKG…DGFHAIFEEI (109 aa)). One can recognise an EGF-like domain in the interval 235–272 (EITACSSSPCFHDGTCLLDSTGSYKCACLAGYTGKHCE). 2 Sushi domains span residues 278-344 (RNCS…ICIK) and 387-444 (APTK…SCIP). The Peptidase S1 domain maps to 445–720 (ICGKTENVSA…FKDWIERNMK (276 aa)). N-linked (GlcNAc...) asparagine glycosylation occurs at asparagine 451. Cystine bridges form between cysteine 489/cysteine 505, cysteine 630/cysteine 649, and cysteine 661/cysteine 697.

The protein belongs to the peptidase S1 family.

The protein localises to the secreted. In terms of biological role, may play a role in regeneration of skeletal muscle. The polypeptide is Inactive serine protease PAMR1 (PAMR1) (Bos taurus (Bovine)).